Consider the following 667-residue polypeptide: Smc-like protein Sph2 (667 aa).

Coiled coils occupy residues 153–295 (GSIQ…SLAT) and 355–517 (GRLD…AITA).

This sequence belongs to the Sph1/Sph2 family.

It localises to the cytoplasm. Functionally, may play a role in replication. The protein is Smc-like protein Sph2 (sph2) of Halobacterium salinarum (strain ATCC 29341 / DSM 671 / R1).